Consider the following 542-residue polypeptide: Apolipoprotein N-acyltransferase (542 aa).

A run of 6 helical transmembrane segments spans residues 26-46 (ASVI…LSLV), 54-74 (IWCL…SWML), 89-109 (LLIS…VLCF), 113-133 (YWGA…VRYY), 163-183 (WAGQ…VLVF), and 187-207 (FSYG…GTYY). In terms of domain architecture, CN hydrolase spans 220–499 (LRVAIVQPGY…PDVLQVSVPV (280 aa)). Glutamate 264 acts as the Proton acceptor in catalysis. The active site involves lysine 349. Cysteine 404 acts as the Nucleophile in catalysis. A helical transmembrane segment spans residues 509 to 529 (FGDAPLLFVAVSSVLGVVGYF).

The protein belongs to the CN hydrolase family. Apolipoprotein N-acyltransferase subfamily.

It localises to the cell inner membrane. The catalysed reaction is N-terminal S-1,2-diacyl-sn-glyceryl-L-cysteinyl-[lipoprotein] + a glycerophospholipid = N-acyl-S-1,2-diacyl-sn-glyceryl-L-cysteinyl-[lipoprotein] + a 2-acyl-sn-glycero-3-phospholipid + H(+). Its pathway is protein modification; lipoprotein biosynthesis (N-acyl transfer). Functionally, catalyzes the phospholipid dependent N-acylation of the N-terminal cysteine of apolipoprotein, the last step in lipoprotein maturation. The polypeptide is Apolipoprotein N-acyltransferase (Chlamydia muridarum (strain MoPn / Nigg)).